Reading from the N-terminus, the 77-residue chain is Acyl carrier protein (77 aa).

Residues 1–76 (MADFEKIKSI…DVIKFIDKLK (76 aa)) enclose the Carrier domain. Ser36 is modified (O-(pantetheine 4'-phosphoryl)serine).

It belongs to the acyl carrier protein (ACP) family. 4'-phosphopantetheine is transferred from CoA to a specific serine of apo-ACP by AcpS. This modification is essential for activity because fatty acids are bound in thioester linkage to the sulfhydryl of the prosthetic group.

The protein resides in the cytoplasm. It functions in the pathway lipid metabolism; fatty acid biosynthesis. Functionally, carrier of the growing fatty acid chain in fatty acid biosynthesis. This is Acyl carrier protein from Leptospira biflexa serovar Patoc (strain Patoc 1 / Ames).